We begin with the raw amino-acid sequence, 640 residues long: Insulin-like growth factor 1 receptor (640 aa).

Fibronectin type-III domains are found at residues 5-101 (VPRP…TMPA) and 107-200 (IPGP…VQAK). Topologically, residues 14–208 (EVMQIANTTM…AKTTYENFIH (195 aa)) are extracellular. N-linked (GlcNAc...) asparagine glycosylation is found at asparagine 20, asparagine 29, asparagine 37, asparagine 173, and asparagine 186. A helical membrane pass occupies residues 209–232 (LMIALPIAVLLIVGGLVIMLYVFH). Over 233–640 (RKRNSSRLGN…ALPLPQSSTC (408 aa)) the chain is Cytoplasmic. The IRS1- and SHC1-binding motif lies at 250–253 (NPEY). Tyrosine 253 carries the phosphotyrosine modification. The Protein kinase domain occupies 272–547 (ITMSRELGQG…SVKDEMEAGF (276 aa)). Residues 278 to 286 (LGQGSFGMV) and lysine 306 contribute to the ATP site. Catalysis depends on aspartate 408, which acts as the Proton acceptor. Residues tyrosine 434, tyrosine 438, and tyrosine 439 each carry the phosphotyrosine; by autocatalysis modification. Glycyl lysine isopeptide (Lys-Gly) (interchain with G-Cter in ubiquitin) cross-links involve residues lysine 441 and lysine 444. Residue serine 551 is modified to Phosphoserine; by GSK3-beta. Serine 555 bears the Phosphoserine mark. Residues 555–640 (SEENKPPEPE…ALPLPQSSTC (86 aa)) are disordered. The segment covering 563–572 (PEELDLEPEN) has biased composition (acidic residues). Over residues 573–589 (MESVPLDPSASSASLPL) the composition is skewed to low complexity. The span at 590–599 (PDRHSGHKAE) shows a compositional bias: basic and acidic residues.

It belongs to the protein kinase superfamily. Tyr protein kinase family. Insulin receptor subfamily. Tetramer of 2 alpha and 2 beta chains linked by disulfide bonds. The alpha chains contribute to the formation of the ligand-binding domain, while the beta chain carries the kinase domain. Interacts with PIK3R1 and with the PTB/PID domains of IRS1 and SHC1 in vitro when autophosphorylated on tyrosine residues. Forms a hybrid receptor with INSR, the hybrid is a tetramer consisting of 1 alpha chain and 1 beta chain of INSR and 1 alpha chain and 1 beta chain of IGF1R. Interacts with ARRB1 and ARRB2. Interacts with GRB10. Interacts with RACK1. Interacts with SOCS1, SOCS2 and SOCS3. Interacts with 14-3-3 proteins. Interacts with NMD2. Interacts with MAP3K5. Interacts with STAT3. Interacts (nascent precursor form) with ZFAND2B. Post-translationally, autophosphorylated on tyrosine residues in response to ligand binding. Autophosphorylation occurs in trans, i.e. one subunit of the dimeric receptor phosphorylates tyrosine residues on the other subunit. Autophosphorylation occurs in a sequential manner; Tyr-438 is predominantly phosphorylated first, followed by phosphorylation of Tyr-434 and Tyr-439. While every single phosphorylation increases kinase activity, all three tyrosine residues in the kinase activation loop (Tyr-438, Tyr-434 and Tyr-439) have to be phosphorylated for optimal activity. Can be autophosphorylated at additional tyrosine residues (in vitro). Autophosphorylated is followed by phosphorylation of juxtamembrane tyrosines and C-terminal serines. May also be phosphorylated at Tyr-434 and Tyr-439 by mTORC2. Phosphorylation of Tyr-253 is required for IRS1- and SHC1-binding. Phosphorylation of Ser-551 by GSK-3beta restrains kinase activity and promotes cell surface expression, it requires a priming phosphorylation at Ser-555. Dephosphorylated by PTPN1. In terms of processing, polyubiquitinated at Lys-441 and Lys-444 through both 'Lys-48' and 'Lys-29' linkages, promoting receptor endocytosis and subsequent degradation by the proteasome. Ubiquitination is facilitated by pre-existing phosphorylation. Sumoylated with SUMO1. Post-translationally, controlled by regulated intramembrane proteolysis (RIP). Undergoes metalloprotease-dependent constitutive ectodomain shedding to produce a membrane-anchored 52 kDa C-Terminal fragment which is further processed by presenilin gamma-secretase to yield an intracellular 50 kDa fragment.

The protein localises to the cell membrane. The catalysed reaction is L-tyrosyl-[protein] + ATP = O-phospho-L-tyrosyl-[protein] + ADP + H(+). Its activity is regulated as follows. Activated by autophosphorylation at Tyr-434, Tyr-438 and Tyr-439 on the kinase activation loop; phosphorylation at all three tyrosine residues is required for optimal kinase activity. Inhibited by MSC1609119A-1, BMS-754807, PQIP, benzimidazole pyridinone, isoquinolinedione, bis-azaindole, 3-cyanoquinoline, 2,4-bis-arylamino-1,3-pyrimidine, pyrrolopyrimidine, pyrrole-5-carboxaldehyde, picropodophyllin (PPP), tyrphostin derivatives. While most inhibitors bind to the ATP binding pocket, MSC1609119A-1 functions as allosteric inhibitor and binds close to the DFG motif and the activation loop. In terms of biological role, receptor tyrosine kinase which mediates actions of insulin-like growth factor 1 (IGF1). Binds IGF1 with high affinity and IGF2 and insulin (INS) with a lower affinity. The activated IGF1R is involved in cell growth and survival control. IGF1R is crucial for tumor transformation and survival of malignant cell. Ligand binding activates the receptor kinase, leading to receptor autophosphorylation, and tyrosines phosphorylation of multiple substrates, that function as signaling adapter proteins including, the insulin-receptor substrates (IRS1/2), Shc and 14-3-3 proteins. Phosphorylation of IRSs proteins lead to the activation of two main signaling pathways: the PI3K-AKT/PKB pathway and the Ras-MAPK pathway. The result of activating the MAPK pathway is increased cellular proliferation, whereas activating the PI3K pathway inhibits apoptosis and stimulates protein synthesis. Phosphorylated IRS1 can activate the 85 kDa regulatory subunit of PI3K (PIK3R1), leading to activation of several downstream substrates, including protein AKT/PKB. AKT phosphorylation, in turn, enhances protein synthesis through mTOR activation and triggers the antiapoptotic effects of IGFIR through phosphorylation and inactivation of BAD. In parallel to PI3K-driven signaling, recruitment of Grb2/SOS by phosphorylated IRS1 or Shc leads to recruitment of Ras and activation of the ras-MAPK pathway. In addition to these two main signaling pathways IGF1R signals also through the Janus kinase/signal transducer and activator of transcription pathway (JAK/STAT). Phosphorylation of JAK proteins can lead to phosphorylation/activation of signal transducers and activators of transcription (STAT) proteins. In particular activation of STAT3, may be essential for the transforming activity of IGF1R. The JAK/STAT pathway activates gene transcription and may be responsible for the transforming activity. JNK kinases can also be activated by the IGF1R. IGF1 exerts inhibiting activities on JNK activation via phosphorylation and inhibition of MAP3K5/ASK1, which is able to directly associate with the IGF1R. When present in a hybrid receptor with INSR, binds IGF1. This chain is Insulin-like growth factor 1 receptor (IGF1R), found in Bos taurus (Bovine).